Reading from the N-terminus, the 103-residue chain is Large ribosomal subunit protein eL14 (103 aa).

It belongs to the eukaryotic ribosomal protein eL14 family.

The polypeptide is Large ribosomal subunit protein eL14 (Ignicoccus hospitalis (strain KIN4/I / DSM 18386 / JCM 14125)).